The following is a 142-amino-acid chain: Hemoglobin subunit alpha-2 (142 aa).

The Globin domain maps to 2–142 (VLSPADKTNV…VSTVLTSKYR (141 aa)). H59 is an O2 binding site. H88 is a binding site for heme b.

The protein belongs to the globin family. As to quaternary structure, heterotetramer of two alpha chains and two beta chains. As to expression, red blood cells.

Its function is as follows. Involved in oxygen transport from the lung to the various peripheral tissues. The polypeptide is Hemoglobin subunit alpha-2 (Arctocephalus galapagoensis (Galapagoes fur seal)).